The sequence spans 445 residues: Questin oxidase (445 aa).

Belongs to the questin oxidase family. It depends on NADPH as a cofactor. In terms of tissue distribution, specifically expressed in conidia.

It participates in secondary metabolite biosynthesis. Questin oxidase; part of the gene cluster that mediates the biosynthesis of trypacidin, a mycotoxin with antiprotozoal activity and that plays a role in the infection process. The pathway begins with the synthesis of atrochrysone thioester by the polyketide synthase (PKS) tpcC. The atrochrysone carboxyl ACP thioesterase tpcB then breaks the thioester bond and releases the atrochrysone carboxylic acid from tpcC. The decarboxylase tpcK converts atrochrysone carboxylic acid to atrochrysone which is further reduced into emodin anthrone. The next step is performed by the emodin anthrone oxygenase tpcL that catalyzes the oxidation of emodinanthrone to emodin. Emodin O-methyltransferase encoded by tpcA catalyzes methylation of the 8-hydroxy group of emodin to form questin. Ring cleavage of questin by questin oxidase tpcI leads to desmethylsulochrin via several intermediates including questin epoxide. Another methylation step catalyzed by tpcM leads to the formation of sulochrin which is further converted to monomethylsulfochrin by tpcH. Finally, the tpcJ catalyzes the conversion of monomethylsulfochrin to trypacidin. Trypacidin is toxic for human pulmonary and bronchial epithelial cells by initiating the intracellular formation of nitric oxide (NO) and hydrogen peroxide (H(2)O(2)), thus triggering host necrotic cell death. The trypacidin pathway is also able to produce endocrocin via a distinct route from the endocrocin Enc pathway. The chain is Questin oxidase from Aspergillus fumigatus (strain ATCC MYA-4609 / CBS 101355 / FGSC A1100 / Af293) (Neosartorya fumigata).